The chain runs to 1071 residues: Nonribosomal peptide synthetase flvI (1071 aa).

The segment at 33–417 is adenylation; it reads RRVLEQHDAP…GSLHFISRKD (385 aa). Positions 552-628 constitute a Carrier domain; it reads MPLTEIELKM…MLCQNIKTDV (77 aa). Ser-589 carries the post-translational modification O-(pantetheine 4'-phosphoryl)serine. The interval 689-961 is condensation; that stretch reads NYTLRLEFKL…IDDRDIEQLS (273 aa).

Belongs to the NRP synthetase family.

The enzyme catalyses (2S)-5,5-dimethylpiperidine-2-carboxylate + 10-hydroxy-pre-flavunoidine + ATP = flavunoidine + AMP + diphosphate + H(+). The protein operates within secondary metabolite biosynthesis; terpenoid biosynthesis. Its function is as follows. Nonribosomal peptide synthetase; part of the gene cluster that mediates the biosynthesis of flavunoidine, an alkaloidal terpenoid with a tetracyclic cage-like core connected to dimethylcadaverine via a C-N bond and acylated with 5,5-dimethyl-L-pipecolate. The tetracyclic core is synthesized by the terpene cyclase flvE and the cytochrome P450 monooxygenase flvD. The terpene cyclase flvE catalyzes the cyclization of farnesyl pyrophosphate (FPP) to form (1R,4R,5S)-(+)-acoradiene and the cytochrome P450 monooxygenase flvD is then responsible for oxidative conversion of (1R,4R,5S)-(+)-acoradiene into the tetracyclic cage present in the final product flavunoidine. In parallel, the N-methyltransferase flvH dimethylates L-lysine to give N,N-dimethyl-L-Lysin which is decarboxylated by flvG to afford dimethylcadaverine. The terpene cyclase-like protein flvF is the enzyme that attaches the dimethylcadaverine precusor at the C-7 of the tetracyclic cage to yield pre-flavunoidine. The cytochrome monooxygenase flvC hydroxylates the C-10 position of pre-flavunoidine whereas the NRPS flvI acylates the terpenoid core at the hydroxylated C-10 with dimethylpipecolate to yield final flavunoidine. The bifunctional enzyme flvA and the dehydrogenase flvB are responsible for the synthesis of the dimethylpipecolate precursor. The PLP-dependent lyase domain of flvA might use L-O-acetyl-homoserine and alpha-keto-isovalerate to form an intermediary ketone that can cyclize intramolecularly to yield an imine. The imine can be reduced by flvB to yield the 6-carboxylated pipecolate. The C-terminal alpha-KG-dependent oxygenase domain of flvA is then proposed to catalyze the decarboxylation to yield dimethylpipecolate. This Aspergillus flavus (strain ATCC 200026 / FGSC A1120 / IAM 13836 / NRRL 3357 / JCM 12722 / SRRC 167) protein is Nonribosomal peptide synthetase flvI.